Consider the following 604-residue polypeptide: MSDGSGRYVPPHIRRGGGNSHESAAADGLSGSRYSGNGFFSSPNRGNHKSSGGFFGSRPFNDRRTGQGSRASGSGGFGGSGGRYGWVNGKHVPYPKNPRLEMELFGNATDHVTSGINFDNYDDIPVEASGDNVPEAITEFKSPPLDELLLENVELANFSKPTPVQKYSIPIVTKNRDLMACAQTGSGKTGGFLFPVLSELFLNGPAPLPEHTRHSYMRKCYPSALVLAPTRELAIQIFDEAKKYTYRSWVKPYVVYGGAPIGQQMRDMDRGCNLLVATPGRLNDLLERGKISLVNVKYLVLDEADRMLDMGFEPQIRHIVEDCDMPSVNDRQTLMFSATFPREIQHLARDFLKDYIFLSVGRVGSTSENIQQKVLFVEDYDKNSALLDILINEIDGLTLVFVETKRMADQLTDFLIVQNFKATAIHGDRTQAERERALHAFRNGIANILVATAVAARGLDIPNVTNVINYDLPTDIDDYVHRIGRTGRAGNVGVATSFFNSNSMNIAKELMDLLTEANQEVPQFLVNMVQDSMRFGRGGRNSRTGSNRGRGSNTRDYRHSNKDDWGSLGSSRRGFRSNDNRGFGNNWGSSSGDGFTNKAANSWW.

A disordered region spans residues 1-79; it reads MSDGSGRYVP…RASGSGGFGG (79 aa). The segment covering 32–45 has biased composition (polar residues); it reads SRYSGNGFFSSPNR. Positions 138-166 match the Q motif motif; it reads TEFKSPPLDELLLENVELANFSKPTPVQK. The Helicase ATP-binding domain maps to 169 to 358; the sequence is IPIVTKNRDL…RDFLKDYIFL (190 aa). 182-189 is a binding site for ATP; it reads AQTGSGKT. The DEAD box motif lies at 302-305; the sequence is DEAD. The region spanning 386–529 is the Helicase C-terminal domain; sequence LLDILINEID…EVPQFLVNMV (144 aa). A disordered region spans residues 535 to 591; that stretch reads FGRGGRNSRTGSNRGRGSNTRDYRHSNKDDWGSLGSSRRGFRSNDNRGFGNNWGSSS. Over residues 541–552 the composition is skewed to low complexity; the sequence is NSRTGSNRGRGS. Basic and acidic residues predominate over residues 553–565; it reads NTRDYRHSNKDDW.

This sequence belongs to the DEAD box helicase family. DDX3/DED1 subfamily.

Its subcellular location is the cytoplasm. The enzyme catalyses ATP + H2O = ADP + phosphate + H(+). ATP-binding RNA helicase involved in translation initiation. Remodels RNA in response to ADP and ATP concentrations by facilitating disruption, but also formation of RNA duplexes. Redundant to DED1, may be required in conditions in which DED1 expression is decreased. This chain is ATP-dependent RNA helicase DBP1 (DBP1), found in Candida glabrata (strain ATCC 2001 / BCRC 20586 / JCM 3761 / NBRC 0622 / NRRL Y-65 / CBS 138) (Yeast).